The chain runs to 360 residues: Histidinol-phosphate aminotransferase (360 aa).

An N6-(pyridoxal phosphate)lysine modification is found at Lys-211.

Belongs to the class-II pyridoxal-phosphate-dependent aminotransferase family. Histidinol-phosphate aminotransferase subfamily. Homodimer. It depends on pyridoxal 5'-phosphate as a cofactor.

The enzyme catalyses L-histidinol phosphate + 2-oxoglutarate = 3-(imidazol-4-yl)-2-oxopropyl phosphate + L-glutamate. The protein operates within amino-acid biosynthesis; L-histidine biosynthesis; L-histidine from 5-phospho-alpha-D-ribose 1-diphosphate: step 7/9. This chain is Histidinol-phosphate aminotransferase, found in Cronobacter sakazakii (strain ATCC BAA-894) (Enterobacter sakazakii).